Here is a 1063-residue protein sequence, read N- to C-terminus: Structural polyprotein (1063 aa).

The segment at 1 to 131 (MASTTPITME…LGPPTNPFQA (131 aa)) is disordered. Residues 18–34 (AQSRALRAGLAAGASQS) are compositionally biased toward low complexity. Residues 30–69 (GASQSRRPRPPRQRDSSTSGDDSGRDSGGPRRRRGNRGRG) are human C1QBP/SF2P32-binding. Ser46 is modified (phosphoserine; by host). Positions 59 to 69 (PRRRRGNRGRG) are enriched in basic residues. Residues 70–87 (QRKDWSRAPPPPEERQES) are compositionally biased toward basic and acidic residues. A compositionally biased stretch (pro residues) spans 93 to 107 (APKPSRAPPQQPQPP). A disulfide bond links Cys153 and Cys197. Residues 279–300 (GAPQAFLAGLLLAAVAVGTARA) form a functions as E2 signal peptide region. Topologically, residues 301 to 534 (GLQPRADMAA…LWLATANALS (234 aa)) are extracellular. 4 N-linked (GlcNAc...) asparagine; by host glycosylation sites follow: Asn353, Asn371, Asn410, and Asn429. Residues 535–555 (LDHAFAAFVLLVPWVLIFMVC) form a helical membrane-spanning segment. The Cytoplasmic segment spans residues 556–582 (RRACRRRGAAAALTAVVLQGYNPPAYG). The functions as E1 signal peptide stretch occupies residues 563–582 (GAAAALTAVVLQGYNPPAYG). Over 583-1028 (EEAFTYLCTA…QTWAEWAAAH (446 aa)) the chain is Extracellular. Cystine bridges form between Cys590–Cys595, Cys619–Cys824, Cys641–Cys653, Cys699–Cys712, Cys758–Cys767, Cys807–Cys817, Cys931–Cys934, and Cys950–Cys983. Asn658 carries an N-linked (GlcNAc...) asparagine; by host glycan. 2 residues coordinate Ca(2+): Asn670 and Ala671. 2 residues coordinate Ca(2+): Asp718 and Thr719. N-linked (GlcNAc...) asparagine; by host glycosylation is found at Asn759 and Asn791. Thr1011 and Thr1012 each carry an O-linked (GalNAc...) threonine; by host glycan. Residues 1029–1049 (WWQLTLGAICALLLAGLLACC) traverse the membrane as a helical segment. The Cytoplasmic portion of the chain corresponds to 1050–1063 (AKCLYYLRGAIAPR).

In terms of assembly, homodimer; further assembles into homooligomer. Interacts with human C1QBP. Interacts (via N-terminus) with protease/methyltransferase p150. Heterodimer with spike glycoprotein E2. As to quaternary structure, heterodimer with spike glycoprotein E1. Structural polyprotein: Specific enzymatic cleavages in vivo yield mature proteins. Two signal peptidase-mediated cleavages within the polyprotein produce the structural proteins capsid, E2, and E1. The E2 signal peptide remains attached to the C-terminus of the capsid protein after cleavage by the signal peptidase. Another signal peptide at E2 C-terminus directs E1 to the ER, with a similar mechanism. In terms of processing, contains three N-linked oligosaccharides. Post-translationally, capsid is phosphorylated on Ser-46 by host. This phosphorylation negatively regulates capsid protein RNA-binding activity. Dephosphorylated by human PP1A.

The protein localises to the virion. Its subcellular location is the host cytoplasm. The protein resides in the host mitochondrion. It is found in the virion membrane. It localises to the host Golgi apparatus membrane. Functionally, capsid protein interacts with genomic RNA and assembles into icosahedric core particles 65-70 nm in diameter. The resulting nucleocapsid eventually associates with the cytoplasmic domain of E2 at the cell membrane, leading to budding and formation of mature virions from host Golgi membranes. Phosphorylation negatively regulates RNA-binding activity, possibly delaying virion assembly during the viral replication phase. Capsid protein dimerizes and becomes disulfide-linked in the virion. Modulates genomic RNA replication. Modulates subgenomic RNA synthesis by interacting with human C1QBP/SF2P32. Induces both perinuclear clustering of mitochondria and the formation of electron-dense intermitochondrial plaques, both hallmarks of rubella virus infected cells. Induces apoptosis when expressed in transfected cells. Responsible for viral attachment to target host cell, by binding to the cell receptor. Its transport to the plasma membrane depends on interaction with E1 protein. The surface glycoproteins display an irregular helical organization and a pseudo-tetrameric inner nucleocapsid arrangement. Its function is as follows. Class II viral fusion protein. Fusion activity is inactive as long as E1 is bound to E2 in mature virion. After virus attachment to target cell and clathrin-mediated endocytosis, acidification of the endosome would induce dissociation of E1/E2 heterodimer and concomitant trimerization of the E1 subunits. This E1 homotrimer is fusion active, and promotes release of viral nucleocapsid in cytoplasm after endosome and viral membrane fusion. The cytoplasmic tail of spike glycoprotein E1 modulates virus release. The surface glycoproteins display an irregular helical organization and a pseudo-tetrameric inner nucleocapsid arrangement. The chain is Structural polyprotein from Homo sapiens (Human).